A 302-amino-acid chain; its full sequence is Glycine--tRNA ligase alpha subunit (302 aa).

The protein belongs to the class-II aminoacyl-tRNA synthetase family. Tetramer of two alpha and two beta subunits.

It is found in the cytoplasm. The catalysed reaction is tRNA(Gly) + glycine + ATP = glycyl-tRNA(Gly) + AMP + diphosphate. This is Glycine--tRNA ligase alpha subunit from Haemophilus influenzae (strain 86-028NP).